We begin with the raw amino-acid sequence, 592 residues long: Arginine--tRNA ligase (592 aa).

A 'HIGH' region motif is present at residues 131–141 (ANPTGPMHVGH).

This sequence belongs to the class-I aminoacyl-tRNA synthetase family. As to quaternary structure, monomer.

Its subcellular location is the cytoplasm. It carries out the reaction tRNA(Arg) + L-arginine + ATP = L-arginyl-tRNA(Arg) + AMP + diphosphate. The chain is Arginine--tRNA ligase from Rhodospirillum rubrum (strain ATCC 11170 / ATH 1.1.1 / DSM 467 / LMG 4362 / NCIMB 8255 / S1).